The following is a 144-amino-acid chain: uncharacterized protein (144 aa).

This sequence belongs to the mimivirus L885/R898 family.

This is an uncharacterized protein from Acanthamoeba polyphaga (Amoeba).